The chain runs to 248 residues: MAGHSQFKNIMHRKGRQDAQKSKLFSKLAREITVAAKLGAPDPAMNARLRSAIIAARQENMPKDNIERAIKKAIGSDGDNYDEMRYEGYGPGGVAVIVEALTDNRNRAASDIRSYFTKSGGNLGETGSVAFMFDHTGLIEYDAGVASADDVLDAAIEAGADDVLSSDTGHEVYASHDTFREVAKALEAKFGEARKAALIWKPQNTVPVDDETGEKLLKLIDLLNEHDDVQNVYANFEISDALMAKMGG.

A disordered region spans residues 1 to 21; the sequence is MAGHSQFKNIMHRKGRQDAQK.

The protein belongs to the TACO1 family.

The protein resides in the cytoplasm. The polypeptide is Probable transcriptional regulatory protein RPE_4771 (Rhodopseudomonas palustris (strain BisA53)).